We begin with the raw amino-acid sequence, 95 residues long: Protein TusB (95 aa).

This sequence belongs to the DsrH/TusB family. In terms of assembly, heterohexamer, formed by a dimer of trimers. The hexameric TusBCD complex contains 2 copies each of TusB, TusC and TusD. The TusBCD complex interacts with TusE.

The protein localises to the cytoplasm. Its function is as follows. Part of a sulfur-relay system required for 2-thiolation of 5-methylaminomethyl-2-thiouridine (mnm(5)s(2)U) at tRNA wobble positions. The sequence is that of Protein TusB from Escherichia coli (strain ATCC 8739 / DSM 1576 / NBRC 3972 / NCIMB 8545 / WDCM 00012 / Crooks).